Reading from the N-terminus, the 234-residue chain is Carboxy-S-adenosyl-L-methionine synthase (234 aa).

S-adenosyl-L-methionine-binding positions include Y35, 60–62 (GCS), 83–84 (DN), 109–110 (DI), N124, and R191.

The protein belongs to the class I-like SAM-binding methyltransferase superfamily. Cx-SAM synthase family. As to quaternary structure, homodimer.

The enzyme catalyses prephenate + S-adenosyl-L-methionine = carboxy-S-adenosyl-L-methionine + 3-phenylpyruvate + H2O. Its function is as follows. Catalyzes the conversion of S-adenosyl-L-methionine (SAM) to carboxy-S-adenosyl-L-methionine (Cx-SAM). This Campylobacter hominis (strain ATCC BAA-381 / DSM 21671 / CCUG 45161 / LMG 19568 / NCTC 13146 / CH001A) protein is Carboxy-S-adenosyl-L-methionine synthase.